The sequence spans 231 residues: MSALCPLLTPPASEALLLAQARQLSGYTLGELAAMAGITTPKDLKRDKGWIGVLLEIWLGASAGSKPEQDFAALGVELKTIPVDSLGRPLETTFVCVAPLTGNSGVTWETSHVRHKLKRVLWVPVEGDRSIPLAERRVGSPLLWSPSEEEDRQLRLDWEELMDMIVLGQVERITARHGEVLQLRPKAANSRALTEAIGARGEPILTLPRGFYLKKNFTQALLARHFLLQNP.

The protein belongs to the MutH family.

It localises to the cytoplasm. Sequence-specific endonuclease that cleaves unmethylated GATC sequences. It is involved in DNA mismatch repair. The protein is DNA mismatch repair protein MutH of Salmonella paratyphi C (strain RKS4594).